We begin with the raw amino-acid sequence, 415 residues long: Multidrug resistance protein MdtA (415 aa).

Positions 1–21 (MKGSYKSRWVIVIVVVIAAIA) are cleaved as a signal peptide. 2 disordered regions span residues 32-56 (SRSAAPGATKQAQQSPAGGRRGMRA) and 392-415 (EAQSATTSEEKATSREYAKKGARS). The span at 399–415 (SEEKATSREYAKKGARS) shows a compositional bias: basic and acidic residues.

It belongs to the membrane fusion protein (MFP) (TC 8.A.1) family. As to quaternary structure, part of a tripartite efflux system composed of MdtA, MdtB and MdtC.

The protein localises to the cell inner membrane. Its function is as follows. The MdtABC tripartite complex confers resistance against novobiocin and deoxycholate. The protein is Multidrug resistance protein MdtA of Escherichia coli O7:K1 (strain IAI39 / ExPEC).